We begin with the raw amino-acid sequence, 413 residues long: Putative competence-damage inducible protein (413 aa).

It belongs to the CinA family.

This Pediococcus pentosaceus (strain ATCC 25745 / CCUG 21536 / LMG 10740 / 183-1w) protein is Putative competence-damage inducible protein.